A 314-amino-acid chain; its full sequence is uncharacterized protein (314 aa).

An N-terminal signal peptide occupies residues 1–26 (MRGRVAGSCAPLGLLLVCLRLPGLFA). Positions 41 to 60 (GTNLPQLGQPSLTGPPNSEH) are enriched in polar residues. Disordered stretches follow at residues 41–65 (GTNLPQLGQPSLTGPPNSEHPQPAL), 77–96 (LKLSVPPSDGFPPAGGSAVQ), 147–191 (GSGP…GKIL), and 292–314 (PPGSSWNTPAGFPNPPSPGLQWG). The span at 147-157 (GSGPLPGESSP) shows a compositional bias: low complexity. Positions 167–177 (SHLHQDSESRR) are enriched in basic and acidic residues. The span at 303-314 (FPNPPSPGLQWG) shows a compositional bias: pro residues.

As to quaternary structure, binds to numerous extracellular matrix proteins. Taste cell specific.

It localises to the secreted. It is found in the extracellular space. The protein resides in the extracellular matrix. This is an uncharacterized protein from Macaca mulatta (Rhesus macaque).